The sequence spans 518 residues: T-box transcription factor TBX5 (518 aa).

Residues 1–46 (MADADEGFGLAHTPLEPDAKDLPCDSKPESALGAPSKSPSSPQAAF) are disordered. The span at 15-28 (LEPDAKDLPCDSKP) shows a compositional bias: basic and acidic residues. Residues 34 to 45 (APSKSPSSPQAA) show a composition bias toward low complexity. The segment at residues 58–238 (LHERELWLKF…NNPFAKGFRG (181 aa)) is a DNA-binding region (T-box). Positions 250-356 (MQSKEYPVVP…PSEEDSFYRS (107 aa)) are disordered. The span at 262 to 301 (TVRQKVASNHSPFSSESRALSTSSNLGSQYQCENGVSGPS) shows a compositional bias: polar residues. The residue at position 339 (Lys339) is an N6-acetyllysine.

As to quaternary structure, monomer. Homodimer (via the T-box); binds DNA as homodimer. Interacts (via the T-box) with NKX2-5 (via the homeobox); this complex binds DNA. Interacts with GATA4. Interacts with KAT2A and KAT2B. In terms of processing, acetylation at Lys-339 by KAT2A and KAT2B promotes nuclear retention.

It localises to the nucleus. Its subcellular location is the cytoplasm. Functionally, DNA-binding protein that regulates the transcription of several genes and is involved in heart development and limb pattern formation. Binds to the core DNA motif of NPPA promoter. This Homo sapiens (Human) protein is T-box transcription factor TBX5 (TBX5).